Consider the following 321-residue polypeptide: GTP cyclohydrolase FolE2 (321 aa).

Belongs to the GTP cyclohydrolase IV family.

The catalysed reaction is GTP + H2O = 7,8-dihydroneopterin 3'-triphosphate + formate + H(+). It functions in the pathway cofactor biosynthesis; 7,8-dihydroneopterin triphosphate biosynthesis; 7,8-dihydroneopterin triphosphate from GTP: step 1/1. In terms of biological role, converts GTP to 7,8-dihydroneopterin triphosphate. In Paracoccus denitrificans (strain Pd 1222), this protein is GTP cyclohydrolase FolE2.